Reading from the N-terminus, the 179-residue chain is MGALRDVGRPPNAIGSAVVSDLSPVFGTVRVEIRRLDPDLPLPRYAHPGDAGADLVTAEDVVLAPGERATVRTGIAIALPDGYAAFIHPRSGLAARHGLTVVNAPGTVDAGYRGEIKVPLLNTDPATPVKLTRGDRIAQLVIQRVERAAFVEVDELSDSARGAGGFGSTGGHAAGAEQS.

Substrate is bound by residues 90 to 92, Asn103, 107 to 109, and Lys117; these read RSG and TVD.

This sequence belongs to the dUTPase family. Mg(2+) is required as a cofactor.

The catalysed reaction is dUTP + H2O = dUMP + diphosphate + H(+). Its pathway is pyrimidine metabolism; dUMP biosynthesis; dUMP from dCTP (dUTP route): step 2/2. Functionally, this enzyme is involved in nucleotide metabolism: it produces dUMP, the immediate precursor of thymidine nucleotides and it decreases the intracellular concentration of dUTP so that uracil cannot be incorporated into DNA. The polypeptide is Deoxyuridine 5'-triphosphate nucleotidohydrolase (Thermobifida fusca (strain YX)).